Consider the following 54-residue polypeptide: MVAWRAAGLNYVRYSQIAAQVVRQCTKGGANVKKPQATLKTTAWENGKMVSKSQ.

Belongs to the eukaryotic ATPase epsilon family. As to quaternary structure, F-type ATPases have 2 components, CF(1) - the catalytic core - and CF(0) - the membrane proton channel. CF(1) has five subunits: alpha(3), beta(3), gamma(1), delta(1), epsilon(1). CF(0) seems to have nine subunits: a, b, c, d, e, f, g, F6 and 8 (or A6L).

Its subcellular location is the mitochondrion. It localises to the mitochondrion inner membrane. Mitochondrial membrane ATP synthase (F(1)F(0) ATP synthase or Complex V) produces ATP from ADP in the presence of a proton gradient across the membrane which is generated by electron transport complexes of the respiratory chain. F-type ATPases consist of two structural domains, F(1) - containing the extramembraneous catalytic core, and F(0) - containing the membrane proton channel, linked together by a central stalk and a peripheral stalk. During catalysis, ATP synthesis in the catalytic domain of F(1) is coupled via a rotary mechanism of the central stalk subunits to proton translocation. Part of the complex F(1) domain and of the central stalk which is part of the complex rotary element. Rotation of the central stalk against the surrounding alpha(3)beta(3) subunits leads to hydrolysis of ATP in three separate catalytic sites on the beta subunits. The chain is Putative ATP synthase subunit epsilon, mitochondrial from Caenorhabditis elegans.